The primary structure comprises 314 residues: MTRKQTPMTLALCALGLFAASAASALAADAPMAPPKSEINAAVGTGAKFTPPPESAIPDDDFGKMVKLGRDIMLDTPKYAKDYVGNTLSCVNCHTDAGRMAGSAPLWAAYVSYPAYRGKNKKVNTFEERLQGCFKFSQNGKAPPLGSKTLVALESYSYWLSKGLPVDEKVAGRGYPNLPEPQQAPDYVRGQKVYEAKCILCHAANGEGQYVNGETVFPPLWGPKSFNWGAGMGSYKNAAKFIYANMPYGMSYSLSPQEAWDVAYFMDAQERPQDPRWQGSVAATRAKFHDSKFSLYGTKVNGKLLGDIGAPKPR.

An N-terminal signal peptide occupies residues 1 to 27 (MTRKQTPMTLALCALGLFAASAASALA). Cytochrome c domains lie at 58-192 (PDDD…RGQK) and 185-270 (PDYV…DAQE). 6 residues coordinate heme c: cysteine 90, cysteine 93, histidine 94, cysteine 198, cysteine 201, and histidine 202.

Monomer. Post-translationally, binds 2 heme c groups covalently per subunit.

The protein localises to the periplasm. The catalysed reaction is 2 thiosulfate + 2 Fe(III)-[cytochrome c] = tetrathionate + 2 Fe(II)-[cytochrome c] + 2 H(+). Catalyzes the oxidation of 2 molecules of thiosulfate to tetrathionate, using TsdB as an electron acceptor. The sequence is that of Thiosulfate dehydrogenase (tsdA) from Thiomonas intermedia (strain K12) (Thiobacillus intermedius).